A 239-amino-acid polypeptide reads, in one-letter code: Orotidine 5'-phosphate decarboxylase (239 aa).

Substrate-binding positions include aspartate 15, lysine 37, 64–73, threonine 126, arginine 187, glutamine 196, glycine 216, and arginine 217; that span reads DLKYHDIPNT. The active-site Proton donor is the lysine 66.

The protein belongs to the OMP decarboxylase family. Type 1 subfamily. In terms of assembly, homodimer.

The enzyme catalyses orotidine 5'-phosphate + H(+) = UMP + CO2. It participates in pyrimidine metabolism; UMP biosynthesis via de novo pathway; UMP from orotate: step 2/2. Catalyzes the decarboxylation of orotidine 5'-monophosphate (OMP) to uridine 5'-monophosphate (UMP). This chain is Orotidine 5'-phosphate decarboxylase, found in Geotalea daltonii (strain DSM 22248 / JCM 15807 / FRC-32) (Geobacter daltonii).